Reading from the N-terminus, the 698-residue chain is Probable threonine--tRNA ligase 2, cytoplasmic (698 aa).

Residues 38–100 (GGGNIKLNDG…EMSGKDYNIE (63 aa)) form the TGS domain. The disordered stretch occupies residues 541 to 560 (NNNNNNNNNNEEINDNNNNN).

Belongs to the class-II aminoacyl-tRNA synthetase family.

The protein localises to the cytoplasm. It carries out the reaction tRNA(Thr) + L-threonine + ATP = L-threonyl-tRNA(Thr) + AMP + diphosphate + H(+). This chain is Probable threonine--tRNA ligase 2, cytoplasmic (thrS2), found in Dictyostelium discoideum (Social amoeba).